Here is a 304-residue protein sequence, read N- to C-terminus: UDP-3-O-acyl-N-acetylglucosamine deacetylase (304 aa).

His-78, His-237, and Asp-241 together coordinate Zn(2+). His-264 serves as the catalytic Proton donor.

The protein belongs to the LpxC family. Requires Zn(2+) as cofactor.

The catalysed reaction is a UDP-3-O-[(3R)-3-hydroxyacyl]-N-acetyl-alpha-D-glucosamine + H2O = a UDP-3-O-[(3R)-3-hydroxyacyl]-alpha-D-glucosamine + acetate. The protein operates within glycolipid biosynthesis; lipid IV(A) biosynthesis; lipid IV(A) from (3R)-3-hydroxytetradecanoyl-[acyl-carrier-protein] and UDP-N-acetyl-alpha-D-glucosamine: step 2/6. Its function is as follows. Catalyzes the hydrolysis of UDP-3-O-myristoyl-N-acetylglucosamine to form UDP-3-O-myristoylglucosamine and acetate, the committed step in lipid A biosynthesis. The sequence is that of UDP-3-O-acyl-N-acetylglucosamine deacetylase from Legionella pneumophila (strain Lens).